The primary structure comprises 1315 residues: Tetratricopeptide repeat protein 21B (1315 aa).

19 TPR repeats span residues 108 to 141 (RKAL…PHDS), 145 to 178 (PILK…GNDI), 192 to 225 (QNYS…QLAL), 285 to 323 (AQLF…TPQQ), 324 to 357 (AEIA…NESN), 492 to 525 (PQAV…SPSY), 563 to 596 (PLYH…PGMR), 616 to 649 (LSIF…FSGT), 721 to 754 (PRSF…NPKD), 756 to 788 (TLAR…GQQN), 790 to 821 (LCYD…EPVS), 830 to 863 (GRSQ…QARI), 883 to 916 (AEIC…CETD), 918 to 950 (KIML…DQDN), 951 to 984 (EPAT…KPDN), 1022 to 1055 (PGFQ…SDWG), 1196 to 1229 (EKSW…NRSC), 1231 to 1263 (KAYE…SNQT), and 1265 to 1298 (PAVG…HPTY).

The protein belongs to the TTC21 family. In terms of assembly, component of the IFT complex A (IFT-A) complex. IFT-A complex is divided into a core subcomplex composed of IFT122:IFT140:WDR19 which is associated with TULP3 and a peripheral subcomplex composed of IFT43:WDR35:TTC21B. Interacts directy with WDR35 and TTC21B. Interacts with TTC25.

The protein localises to the cytoplasm. The protein resides in the cytoskeleton. It localises to the cilium axoneme. In terms of biological role, component of the IFT complex A (IFT-A), a complex required for retrograde ciliary transport and entry into cilia of G protein-coupled receptors (GPCRs). Essential for retrograde trafficking of IFT-1, IFT-B and GPCRs. Negatively modulates the SHH signal transduction. This Mus musculus (Mouse) protein is Tetratricopeptide repeat protein 21B (Ttc21b).